The following is a 409-amino-acid chain: Probable tRNA N6-adenosine threonylcarbamoyltransferase, mitochondrial (409 aa).

The N-terminal 31 residues, 1-31 (MHALRNFAGNGIANVFGCGIRRRLSYVLGIE), are a transit peptide targeting the mitochondrion. A divalent metal cation is bound by residues histidine 135 and histidine 139. Residues 159–163 (LASGG), aspartate 192, glycine 212, glutamate 216, 322–323 (NN), and serine 350 each bind substrate. Aspartate 351 serves as a coordination point for a divalent metal cation.

It belongs to the KAE1 / TsaD family. In terms of assembly, homodimer. The cofactor is a divalent metal cation.

Its subcellular location is the mitochondrion. It catalyses the reaction L-threonylcarbamoyladenylate + adenosine(37) in tRNA = N(6)-L-threonylcarbamoyladenosine(37) in tRNA + AMP + H(+). Its function is as follows. Required for the formation of a threonylcarbamoyl group on adenosine at position 37 (t(6)A37) in mitochondrial tRNAs that read codons beginning with adenine. Probably involved in the transfer of the threonylcarbamoyl moiety of threonylcarbamoyl-AMP (TC-AMP) to the N6 group of A37. Involved in mitochondrial genome maintenance. The protein is Probable tRNA N6-adenosine threonylcarbamoyltransferase, mitochondrial of Drosophila melanogaster (Fruit fly).